A 413-amino-acid chain; its full sequence is Arginine biosynthesis bifunctional protein ArgJ (413 aa).

Residues T160, K186, T197, E284, N408, and S413 each coordinate substrate. The Nucleophile role is filled by T197.

Belongs to the ArgJ family. In terms of assembly, heterotetramer of two alpha and two beta chains.

It localises to the cytoplasm. It catalyses the reaction N(2)-acetyl-L-ornithine + L-glutamate = N-acetyl-L-glutamate + L-ornithine. It carries out the reaction L-glutamate + acetyl-CoA = N-acetyl-L-glutamate + CoA + H(+). Its pathway is amino-acid biosynthesis; L-arginine biosynthesis; L-ornithine and N-acetyl-L-glutamate from L-glutamate and N(2)-acetyl-L-ornithine (cyclic): step 1/1. It functions in the pathway amino-acid biosynthesis; L-arginine biosynthesis; N(2)-acetyl-L-ornithine from L-glutamate: step 1/4. Its function is as follows. Catalyzes two activities which are involved in the cyclic version of arginine biosynthesis: the synthesis of N-acetylglutamate from glutamate and acetyl-CoA as the acetyl donor, and of ornithine by transacetylation between N(2)-acetylornithine and glutamate. This Burkholderia pseudomallei (strain 1710b) protein is Arginine biosynthesis bifunctional protein ArgJ.